The sequence spans 304 residues: Protein pxr1 (304 aa).

Basic residues predominate over residues 1 to 11 (MGLAAPRKKTK). Disordered regions lie at residues 1–25 (MGLA…SRST), 144–238 (NATA…DTET), and 256–276 (TSLL…MGRR). The span at 15–25 (DPNNTSWSRST) shows a compositional bias: polar residues. The 55-residue stretch at 25-79 (TDGFGHRILKAQGWTPGDFLGARNATHSDLFTTASASHIRVVLKDDTLGLGARPK) folds into the G-patch domain. Basic and acidic residues-rich tracts occupy residues 154–170 (LRVD…HENG) and 204–238 (GKEM…DTET). A compositionally biased stretch (polar residues) spans 256-266 (TSLLASNGPST).

Belongs to the PINX1 family.

Its subcellular location is the nucleus. It localises to the nucleolus. In terms of biological role, involved in rRNA-processing at A0, A1 and A2 sites and negatively regulates telomerase. In Aspergillus fumigatus (strain ATCC MYA-4609 / CBS 101355 / FGSC A1100 / Af293) (Neosartorya fumigata), this protein is Protein pxr1 (pxr1).